Here is a 577-residue protein sequence, read N- to C-terminus: Arginine--tRNA ligase (577 aa).

The 'HIGH' region signature appears at 122–132 (PNVAKEMHVGH).

Belongs to the class-I aminoacyl-tRNA synthetase family. As to quaternary structure, monomer.

The protein resides in the cytoplasm. It carries out the reaction tRNA(Arg) + L-arginine + ATP = L-arginyl-tRNA(Arg) + AMP + diphosphate. This is Arginine--tRNA ligase from Haemophilus influenzae (strain 86-028NP).